We begin with the raw amino-acid sequence, 352 residues long: Sporozoite surface protein P36 (352 aa).

The signal sequence occupies residues 1–29; it reads MKQYEFARHINTYFSVAQNMLFSIFLYYA. 6-Cys domains lie at 53–199 and 210–351; these read YMCI…IKKA and YIKG…STKE. C57 and C90 are disulfide-bonded. N89, N97, N111, N156, and N160 each carry an N-linked (GlcNAc...) asparagine glycan. 5 cysteine pairs are disulfide-bonded: C104–C179, C122–C177, C214–C238, C252–C333, and C269–C331. A glycan (N-linked (GlcNAc...) asparagine) is linked at N254.

The protein resides in the cell membrane. The protein localises to the cell surface. Involved in sporozoite infection of hepatocytes and replication therein. The protein is Sporozoite surface protein P36 (PBS36) of Plasmodium berghei (strain Anka).